The following is a 430-amino-acid chain: Chromatin assembly factor 1 p55 subunit (430 aa).

Residues Ser-11 and Ser-100 each carry the phosphoserine modification. WD repeat units follow at residues 126-159, 179-210, 229-260, 275-306, 319-350, and 376-407; these read NHEG…FDYT, GHQK…CLWD, GHTA…MIWD, AHTA…ALWD, SHKD…HVWD, and GHTA…QVWQ.

This sequence belongs to the WD repeat RBAP46/RBAP48/MSI1 family. Probably binds directly to helix 1 of the histone fold of histone H4, a region that is not accessible when H4 is in chromatin. Self associates. Associates with chromatin. Component of the CAF-1 complex, composed of Caf1-55, Caf1-105 and Caf1-180; within the CAF-1 complex, Caf1-180 interacts directly with both Caf1-55 and Caf1-105. Component of the NuRD complex, composed of at least Caf1-55, Mi-2, MTA1-like and HDAC1/Rpd3. Within the NuRD complex, Caf1-55 may interact directly with Mi-2, MTA1-like and HDAC1/Rpd3. The NuRD complex may also associate with the methyl-DNA binding protein MBD-like via Caf1-55 and Mi-2. Component of the NURF complex, composed of Caf1-55, E(bx), Nurf-38 and Iswi. Component of the polycomb repressive complex 2 (PRC2, also known as the Esc/E(Z) complex), composed of Caf1-55, esc, E(z), Su(z)12, and possibly pho. PRC2 associates with the accessory components Jarid2 and jing to form the PRC2 Jarid2-jing variant (PRC2.2). PRC2 may also associate with Pcl and HDAC1/Rpd3 during early embryogenesis. Interacts with Rbf and Rbf2. Component of the DREAM complex at least composed of Myb, Caf1-55, mip40, mip120, mip130, E2f2, Dp, Rbf, Rbf2, lin-52, HDAC1/Rpd3 and l(3)mbt.

The protein localises to the nucleus. Functionally, core histone-binding subunit that may target chromatin assembly factors, chromatin remodeling factors and histone deacetylases to their histone substrates in a manner that is regulated by nucleosomal DNA. Component of several complexes which regulate chromatin metabolism. These include the chromatin assembly factor 1 (CAF-1) complex, which is required for chromatin assembly following DNA replication and DNA repair; the nucleosome remodeling and deacetylase complex (the NuRD complex), which promotes transcriptional repression by histone deacetylation and nucleosome remodeling; the nucleosome remodeling factor (NURF) complex, which catalyzes ATP-dependent nucleosome sliding and facilitates transcription of chromatin; and the polycomb group (PcG) repressor complex ESC-E(Z), which promotes repression of homeotic genes during development. Also required for transcriptional repression of E2F target genes by E2f2 and Rbf or Rbf2. This Drosophila melanogaster (Fruit fly) protein is Chromatin assembly factor 1 p55 subunit.